Consider the following 903-residue polypeptide: Translation initiation factor IF-2 (903 aa).

Disordered regions lie at residues 57-171 and 267-318; these read EKFK…QRRR and PTPQ…EAVT. Basic and acidic residues predominate over residues 69–163; it reads KKEAKEPSEK…SEPQKPKESL (95 aa). The span at 267–278 shows a compositional bias: low complexity; it reads PTPQPMQKTKQP. A compositionally biased stretch (basic residues) spans 299-308; the sequence is RRARKKHKKP. Residues 402 to 569 form the tr-type G domain; that stretch reads PRAPVITIMG…IVLLQAEILE (168 aa). The G1 stretch occupies residues 411-418; the sequence is GHVDHGKT. 411–418 is a binding site for GTP; the sequence is GHVDHGKT. Residues 436 to 440 are G2; that stretch reads GITQH. Residues 457–460 form a G3 region; the sequence is DTPG. GTP contacts are provided by residues 457–461 and 511–514; these read DTPGH and NKMD. The segment at 511–514 is G4; sequence NKMD. The segment at 547–549 is G5; the sequence is SAK.

It belongs to the TRAFAC class translation factor GTPase superfamily. Classic translation factor GTPase family. IF-2 subfamily.

The protein localises to the cytoplasm. One of the essential components for the initiation of protein synthesis. Protects formylmethionyl-tRNA from spontaneous hydrolysis and promotes its binding to the 30S ribosomal subunits. Also involved in the hydrolysis of GTP during the formation of the 70S ribosomal complex. This Campylobacter curvus (strain 525.92) protein is Translation initiation factor IF-2.